The sequence spans 497 residues: 4,4'-diaponeurosporene oxygenase (497 aa).

An FAD-binding site is contributed by Val-7 to Ile-19.

The protein belongs to the carotenoid/retinoid oxidoreductase family. CrtP subfamily. The cofactor is FAD.

It carries out the reaction all-trans-4,4'-diaponeurosporene + 2 AH2 + 2 O2 = 4,4'-diaponeurosporenal + 2 A + 3 H2O. The protein operates within carotenoid biosynthesis; staphyloxanthin biosynthesis; staphyloxanthin from farnesyl diphosphate: step 3/5. In terms of biological role, involved in the biosynthesis of the yellow-orange carotenoid staphyloxanthin, which plays a role in the virulence via its protective function against oxidative stress. Catalyzes the oxidation of the terminal methyl side group of 4,4'-diaponeurosporene to form 4,4'-diaponeurosporen-4-al. This is 4,4'-diaponeurosporene oxygenase from Staphylococcus aureus (strain MRSA252).